An 84-amino-acid polypeptide reads, in one-letter code: Sulfur carrier protein TusA (84 aa).

Residue cysteine 21 is the Cysteine persulfide intermediate of the active site.

The protein belongs to the sulfur carrier protein TusA family.

The protein localises to the cytoplasm. Functionally, sulfur carrier protein which probably makes part of a sulfur-relay system. This chain is Sulfur carrier protein TusA, found in Pseudomonas syringae pv. tomato (strain ATCC BAA-871 / DC3000).